The following is a 183-amino-acid chain: Peptidyl-prolyl cis-trans isomerase 11 (183 aa).

The PPIase cyclophilin-type domain occupies 20–182 (FLEVTAGGAP…LPIVVVQCGQ (163 aa)).

This sequence belongs to the cyclophilin-type PPIase family. PPIase H subfamily.

It carries out the reaction [protein]-peptidylproline (omega=180) = [protein]-peptidylproline (omega=0). PPIases accelerate the folding of proteins. It catalyzes the cis-trans isomerization of proline imidic peptide bonds in oligopeptides. The chain is Peptidyl-prolyl cis-trans isomerase 11 (cyn-11) from Caenorhabditis elegans.